The following is a 466-amino-acid chain: ATP synthase subunit beta (466 aa).

153–160 (GGAGVGKT) is an ATP binding site.

This sequence belongs to the ATPase alpha/beta chains family. F-type ATPases have 2 components, CF(1) - the catalytic core - and CF(0) - the membrane proton channel. CF(1) has five subunits: alpha(3), beta(3), gamma(1), delta(1), epsilon(1). CF(0) has three main subunits: a(1), b(2) and c(9-12). The alpha and beta chains form an alternating ring which encloses part of the gamma chain. CF(1) is attached to CF(0) by a central stalk formed by the gamma and epsilon chains, while a peripheral stalk is formed by the delta and b chains.

The protein localises to the cell membrane. The enzyme catalyses ATP + H2O + 4 H(+)(in) = ADP + phosphate + 5 H(+)(out). Functionally, produces ATP from ADP in the presence of a proton gradient across the membrane. The catalytic sites are hosted primarily by the beta subunits. In Oenococcus oeni (strain ATCC BAA-331 / PSU-1), this protein is ATP synthase subunit beta.